The primary structure comprises 136 residues: Large ribosomal subunit protein eL27 (136 aa).

Positions 5–40 (MKPGKVVMVLAGRYAGRKAVIVKNIDDGTADRPYSH) constitute a KOW domain.

The protein belongs to the eukaryotic ribosomal protein eL27 family. In terms of assembly, component of the large ribosomal subunit.

It localises to the cytoplasm. It is found in the cytosol. Its subcellular location is the rough endoplasmic reticulum. Functionally, component of the large ribosomal subunit. The polypeptide is Large ribosomal subunit protein eL27 (rpl27) (Hippocampus comes (Tiger tail seahorse)).